Here is a 300-residue protein sequence, read N- to C-terminus: Cation-efflux pump FieF (300 aa).

Transmembrane regions (helical) follow at residues 11–31 (LAAVSATAVALVLFVMKVFAW), 40–60 (LASLVDSLVDIAASLVNLLVV), 81–101 (LAALAQSMFISGSALFLILTG), and 114–134 (PEVGMWVTLIALVATLLLVSF). The Zn(2+) site is built by Asp45 and Asp49. Residues His153 and Asp157 each contribute to the Zn(2+) site. The next 2 membrane-spanning stretches (helical) occupy residues 156–176 (SDLLMNGAILVALALSWKGIT) and 182–202 (FALGIGVYILYSALRMGYDAV).

This sequence belongs to the cation diffusion facilitator (CDF) transporter (TC 2.A.4) family. FieF subfamily. As to quaternary structure, homodimer.

It is found in the cell inner membrane. It carries out the reaction Zn(2+)(in) + H(+)(out) = Zn(2+)(out) + H(+)(in). The catalysed reaction is Cd(2+)(in) + H(+)(out) = Cd(2+)(out) + H(+)(in). The enzyme catalyses Fe(2+)(in) + H(+)(out) = Fe(2+)(out) + H(+)(in). Functionally, divalent metal cation transporter which exports Zn(2+), Cd(2+) and possibly Fe(2+). May be involved in zinc and iron detoxification by efflux. This is Cation-efflux pump FieF from Pectobacterium atrosepticum (strain SCRI 1043 / ATCC BAA-672) (Erwinia carotovora subsp. atroseptica).